The following is a 644-amino-acid chain: DNA mismatch repair protein MutL (644 aa).

The segment at 336 to 356 (KRNINPLNRDDKTKDKSEYQK) is disordered. Residues 343-356 (NRDDKTKDKSEYQK) show a composition bias toward basic and acidic residues.

It belongs to the DNA mismatch repair MutL/HexB family.

This protein is involved in the repair of mismatches in DNA. It is required for dam-dependent methyl-directed DNA mismatch repair. May act as a 'molecular matchmaker', a protein that promotes the formation of a stable complex between two or more DNA-binding proteins in an ATP-dependent manner without itself being part of a final effector complex. The protein is DNA mismatch repair protein MutL of Halothermothrix orenii (strain H 168 / OCM 544 / DSM 9562).